A 195-amino-acid chain; its full sequence is MSRKATIERVTKETQIKLSLEIDGAGEAKICTSVPFLDHMLDLFARHGLFNLQVDARGDIDIDFHHTVEDIGIVLGQALKEALGDKKGIRRYGQASVPMDETLASVAVDISGRPYLVYHVALPKVKIGEFDVELVREFFQAVVNNLGANIHVNVMYGDNVHHMVEACFKAFARAMDQATQVDPRIEGVMSTKGKL.

The protein belongs to the imidazoleglycerol-phosphate dehydratase family.

It is found in the cytoplasm. It catalyses the reaction D-erythro-1-(imidazol-4-yl)glycerol 3-phosphate = 3-(imidazol-4-yl)-2-oxopropyl phosphate + H2O. It functions in the pathway amino-acid biosynthesis; L-histidine biosynthesis; L-histidine from 5-phospho-alpha-D-ribose 1-diphosphate: step 6/9. This Geobacter metallireducens (strain ATCC 53774 / DSM 7210 / GS-15) protein is Imidazoleglycerol-phosphate dehydratase.